The following is a 472-amino-acid chain: Inactive CLIP domain-containing serine protease A3 (472 aa).

The next 2 membrane-spanning stretches (helical) occupy residues 51–71 and 78–98; these read ISFV…WSSM and LPAL…HTYA. N-linked (GlcNAc...) asparagine glycosylation is found at asparagine 122, asparagine 133, asparagine 149, and asparagine 152. Positions 223–470 constitute a Peptidase S1 domain; that stretch reads VAAAKAPAAG…YVPWITSTVS (248 aa). 3 cysteine pairs are disulfide-bonded: cysteine 354–cysteine 428, cysteine 386–cysteine 408, and cysteine 418–cysteine 446.

It belongs to the peptidase S1 family. CLIP subfamily. In terms of tissue distribution, expressed at highest levels in head and salivary gland. Expressed in ovary and carcass. Minimal expression in midgut.

It is found in the membrane. Functionally, probable inactive serine protease. Induces migration of cultured mouse embryonic fibroblasts. Its function is as follows. (Microbial infection) Promotes dengue virus type 2 replication in the host. In Aedes aegypti (Yellowfever mosquito), this protein is Inactive CLIP domain-containing serine protease A3.